Consider the following 1642-residue polypeptide: Cobra venom factor (1642 aa).

A signal peptide spans 1 to 22 (MERMALYLVAALLIGFPGSSHG). 3 N-linked (GlcNAc...) asparagine glycosylation sites follow: asparagine 153, asparagine 158, and asparagine 209. Mg(2+)-binding residues include proline 516, aspartate 539, valine 540, and aspartate 542. Disulfide bonds link cysteine 544-cysteine 801, cysteine 609-cysteine 644, cysteine 677-cysteine 704, cysteine 678-cysteine 711, cysteine 691-cysteine 712, cysteine 857-cysteine 1492, cysteine 1340-cysteine 1468, cysteine 1368-cysteine 1437, cysteine 1485-cysteine 1490, cysteine 1497-cysteine 1569, cysteine 1516-cysteine 1640, and cysteine 1616-cysteine 1625. Positions 650–732 (RRRRSSVLLL…QRESELFLAR (83 aa)) are excised as a propeptide. Positions 654 to 732 (SSVLLLDSNA…QRESELFLAR (79 aa)) are C3a-like domain. Residues 677 to 712 (CCEDVMHENPMGYTCEKRAKYIQEGDACKAAFLECC) enclose the Anaphylatoxin-like domain. Positions 736–747 (EDGFIADSDIIS) are factor B binding site. The propeptide occupies 985–1263 (HLIITPSGCG…VMAFQALAEY (279 aa)). A C3d-like domain region spans residues 985-1263 (HLIITPSGCG…VMAFQALAEY (279 aa)). A cross-link (isoglutamyl cysteine thioester (Cys-Gln)) is located at residues 993-996 (CGEQ). The segment at 1190–1253 (VLMAASTGRD…GETYGQTQAT (64 aa)) is factor H binding site. Asparagine 1346 carries an N-linked (GlcNAc...) asparagine glycan. The region spanning 1497-1640 (CSSLNHQERI…FSYTLTEFGC (144 aa)) is the NTR domain.

Belongs to the venom complement C3 homolog family. As to quaternary structure, heterotrimer of alpha, beta and gamma chains; disulfide-linked. Is active with factor B in the presence of factor D. In terms of processing, first processed by the removal of 4 Arg residues by furin-type protease, forming two chains, alpha and gamma/beta precursor, linked by a disulfide bond. Probably, the cobrin cleaves the C3a-like domain and then the C3d-like domain, generating the mature cobra venom factor (CVF). This mature CVF is composed of three chains: alpha, gamma and beta. Contains 3 N-linked oligosaccharide chains, two in the alpha-chain and one in the beta-chain. Glycosylation is not required for the biological activity. However, it contributes to the immunogenicity of CVF. The carbohydrate content is 7.4. The major oligosaccharide is a symmetric fucosylated biantennary complex-type chain with an unusual alpha-galactosylated Le(x) structure at its non-reducing end. As to expression, expressed by the venom gland.

Its subcellular location is the secreted. In terms of biological role, complement-activating protein in cobra venom. It is a structural and functional analog of complement component C3b, the activated form of C3. It binds factor B (CFB), which is subsequently cleaved by factor D (CFD) to form the bimolecular complex CVF/Bb. CVF/Bb is a C3/C5 convertase that cleaves both complement components C3 and C5. Structurally, it resembles the C3b degradation product C3c, which is not able to form a C3/C5 convertase. Unlike C3b/Bb, CVF/Bb is a stable complex and completely resistant to the actions of complement regulatory factors H (CFH) and I (CFI). Therefore, CVF continuously activates complement resulting in the depletion of complement activity. The sequence is that of Cobra venom factor from Naja kaouthia (Monocled cobra).